Reading from the N-terminus, the 673-residue chain is Flotillin family inner membrane protein sll1021 (673 aa).

Residues 60–80 (LLFFPVVIIAVIFLILVTIFL) traverse the membrane as a helical segment. The tract at residues 639-673 (LQDPPSVSPPSAAVSEDDWPDLAPPTETNFSPEEI) is disordered. Residues 664–673 (TETNFSPEEI) are compositionally biased toward polar residues.

The protein belongs to the band 7/mec-2 family. Flotillin subfamily. As to quaternary structure, homooligomerizes.

It is found in the cell inner membrane. Its subcellular location is the membrane raft. Its function is as follows. Found in functional membrane microdomains (FMM) that may be equivalent to eukaryotic membrane rafts. FMMs are highly dynamic and increase in number as cells age. Flotillins are thought to be important factors in membrane fluidity. The polypeptide is Flotillin family inner membrane protein sll1021 (Synechocystis sp. (strain ATCC 27184 / PCC 6803 / Kazusa)).